A 277-amino-acid polypeptide reads, in one-letter code: Putative phosphoenolpyruvate synthase regulatory protein (277 aa).

157 to 164 (GVSRSGKT) serves as a coordination point for ADP.

The protein belongs to the pyruvate, phosphate/water dikinase regulatory protein family. PSRP subfamily.

It catalyses the reaction [pyruvate, water dikinase] + ADP = [pyruvate, water dikinase]-phosphate + AMP + H(+). The enzyme catalyses [pyruvate, water dikinase]-phosphate + phosphate + H(+) = [pyruvate, water dikinase] + diphosphate. Functionally, bifunctional serine/threonine kinase and phosphorylase involved in the regulation of the phosphoenolpyruvate synthase (PEPS) by catalyzing its phosphorylation/dephosphorylation. This is Putative phosphoenolpyruvate synthase regulatory protein from Vibrio atlanticus (strain LGP32) (Vibrio splendidus (strain Mel32)).